The sequence spans 213 residues: Adenylate kinase (213 aa).

Position 10 to 15 (10 to 15) interacts with ATP; it reads GSGKGT. An NMP region spans residues 30–59; the sequence is SVGDLLRNIISSSSELGKKIKGTVESGNLI. Residues Arg36, 57–59, 83–86, and Gln90 each bind AMP; these read NLI and GFPR. Positions 125–160 are LID; sequence NRLACLDCKNIYSVSSFKSTTCAKCKSTRLEKRIDD. An ATP-binding site is contributed by Arg126. Cys129 and Cys132 together coordinate Zn(2+). Residue 135 to 136 participates in ATP binding; sequence IY. Cys146 and Cys149 together coordinate Zn(2+). AMP is bound by residues Arg157 and Arg169. Residue Leu195 coordinates ATP.

This sequence belongs to the adenylate kinase family. As to quaternary structure, monomer.

The protein resides in the cytoplasm. It carries out the reaction AMP + ATP = 2 ADP. It functions in the pathway purine metabolism; AMP biosynthesis via salvage pathway; AMP from ADP: step 1/1. Functionally, catalyzes the reversible transfer of the terminal phosphate group between ATP and AMP. Plays an important role in cellular energy homeostasis and in adenine nucleotide metabolism. This Wolbachia pipientis wMel protein is Adenylate kinase.